The sequence spans 335 residues: Protein-arginine kinase (335 aa).

One can recognise a Phosphagen kinase C-terminal domain in the interval 21 to 244; it reads IVMSSRIRLA…NQIIHDEKQI (224 aa). ATP-binding positions include 24 to 28, His82, Arg115, 166 to 170, and 197 to 202; these read SSRIR, RASVM, and RGIYGE.

The protein belongs to the ATP:guanido phosphotransferase family.

The catalysed reaction is L-arginyl-[protein] + ATP = N(omega)-phospho-L-arginyl-[protein] + ADP + H(+). Its function is as follows. Catalyzes the specific phosphorylation of arginine residues in proteins. The chain is Protein-arginine kinase from Staphylococcus aureus (strain Mu3 / ATCC 700698).